The following is a 1165-amino-acid chain: Peroxisomal ATPase PEX6 (1165 aa).

This sequence belongs to the AAA ATPase family. Interacts with PEX1; forming the PEX1-PEX6 AAA ATPase complex, which is composed of a heterohexamer formed by a trimer of PEX1-PEX6 dimers.

The protein localises to the membrane. The catalysed reaction is ATP + H2O = ADP + phosphate + H(+). Component of the PEX1-PEX6 AAA ATPase complex involved in peroxisome biosynthesis. The complex acts as a protein dislocase complex that mediates the ATP-dependent extraction of the PEX5 receptor from peroxisomal membranes, an essential step for PEX5 recycling. Specifically recognizes PEX5 monoubiquitinated at 'Cys-6', and pulls it out of the peroxisome lumen through the PEX2-PEX10-PEX12 retrotranslocation channel. Extraction by the PEX1-PEX6 AAA ATPase complex is accompanied by unfolding of the TPR repeats and release of bound cargo from PEX5. The chain is Peroxisomal ATPase PEX6 from Komagataella pastoris (Yeast).